Here is a 382-residue protein sequence, read N- to C-terminus: MSDMIRDFFKMESAGGILLVIAAAIAMVIANSAMGEGYQAFLHTYVFGMSVSHWINDGLMAVFFLLIGLEVKRELLEGALKSRETAIFPAIAAVGGMLAPALIYVAFNFNDPAAIQGWAIPAATDIAFALGIMALLGKRVPVSLKVFLLALAIIDDLGVVVIIALFYSSDLSTIALTIGFIMTGVLFMLNAKHVTKLSIYLVAGLILWIAVLKSGVHATLAGVVIGFAIPLKGNKGEHSPLKHLEHALHPYVAFAILPVFAFANAGISLQGVSLAGLTSMLPLGVALGLFLGKPLGIFSFSWAAVKLGVAKLPEGINFKHIFAVSVLCGIGFTMSIFISSLAFGQANEAYDTYARLGILMGSTTAALLGYSLLRLSLPLKKA.

11 consecutive transmembrane segments (helical) span residues 14–34, 47–67, 87–107, 117–137, 146–166, 171–191, 205–225, 247–267, 271–291, 321–341, and 353–373; these read AGGI…NSAM, FGMS…FLLI, IFPA…YVAF, GWAI…ALLG, VFLL…IALF, LSTI…MLNA, LILW…GVVI, ALHP…NAGI, GVSL…GLFL, IFAV…ISSL, and YARL…YSLL.

This sequence belongs to the NhaA Na(+)/H(+) (TC 2.A.33) antiporter family.

The protein localises to the cell inner membrane. The catalysed reaction is Na(+)(in) + 2 H(+)(out) = Na(+)(out) + 2 H(+)(in). Na(+)/H(+) antiporter that extrudes sodium in exchange for external protons. This is Na(+)/H(+) antiporter NhaA from Vibrio cholerae serotype O1 (strain ATCC 39541 / Classical Ogawa 395 / O395).